Reading from the N-terminus, the 261-residue chain is tRNA pseudouridine synthase A (261 aa).

Asp-51 functions as the Nucleophile in the catalytic mechanism. Tyr-109 serves as a coordination point for substrate.

Belongs to the tRNA pseudouridine synthase TruA family. Homodimer.

The catalysed reaction is uridine(38/39/40) in tRNA = pseudouridine(38/39/40) in tRNA. Functionally, formation of pseudouridine at positions 38, 39 and 40 in the anticodon stem and loop of transfer RNAs. In Shewanella sp. (strain W3-18-1), this protein is tRNA pseudouridine synthase A.